The following is a 431-amino-acid chain: ORC1-type DNA replication protein 14 (431 aa).

Residues 62-66 (TGKSL), Tyr-219, and Arg-231 each bind ATP.

It belongs to the CDC6/cdc18 family.

Involved in regulation of DNA replication. The sequence is that of ORC1-type DNA replication protein 14 (cdc6n) from Haloarcula marismortui (strain ATCC 43049 / DSM 3752 / JCM 8966 / VKM B-1809) (Halobacterium marismortui).